Consider the following 89-residue polypeptide: UPF0298 protein GTNG_0961 (89 aa).

It belongs to the UPF0298 family.

Its subcellular location is the cytoplasm. The sequence is that of UPF0298 protein GTNG_0961 from Geobacillus thermodenitrificans (strain NG80-2).